The following is a 468-amino-acid chain: Putative magnesium transporter MRS2-G (468 aa).

2 disordered regions span residues 1 to 76 (MGRR…AGKV) and 183 to 204 (GQPG…QVPR). Low complexity-rich tracts occupy residues 14–23 (ASNASTSSST) and 31–45 (RLPS…SSPS). Pro residues predominate over residues 46–67 (PASPSPPPPSASHPAPPSPPLA). Over residues 187–201 (GDDHGEKHDDSHGDQ) the composition is skewed to basic and acidic residues. The next 2 helical transmembrane spans lie at 402 to 422 (LTLT…GAFA) and 437 to 457 (FFWP…IVLL).

This sequence belongs to the CorA metal ion transporter (MIT) (TC 1.A.35.5) family. As to quaternary structure, interacts with CYCB2-2.

It localises to the membrane. Its function is as follows. Putative magnesium transporter. The chain is Putative magnesium transporter MRS2-G (MRS2-G) from Oryza sativa subsp. japonica (Rice).